Reading from the N-terminus, the 239-residue chain is Fatty acid metabolism regulator protein (239 aa).

In terms of domain architecture, HTH gntR-type spans 6 to 74; it reads QSPAGFAEEY…HGKPTKINNF (69 aa). A DNA-binding region (H-T-H motif) is located at residues 34–53; it reads ERELSELIGVTRTTLREVLQ.

As to quaternary structure, homodimer.

It localises to the cytoplasm. Its function is as follows. Multifunctional regulator of fatty acid metabolism. The protein is Fatty acid metabolism regulator protein of Pectobacterium carotovorum subsp. carotovorum (strain PC1).